A 206-amino-acid polypeptide reads, in one-letter code: A-type ATP synthase subunit D (206 aa).

This sequence belongs to the V-ATPase D subunit family. Has multiple subunits with at least A(3), B(3), C, D, E, F, H, I and proteolipid K(x).

It localises to the cell membrane. Its function is as follows. Component of the A-type ATP synthase that produces ATP from ADP in the presence of a proton gradient across the membrane. This is A-type ATP synthase subunit D from Methanococcoides burtonii (strain DSM 6242 / NBRC 107633 / OCM 468 / ACE-M).